The primary structure comprises 258 residues: MELIRVLANLLILQLSYAQKSSELIIGGDECNIDEHRFLVALYKSGRFRCGGTLINQEWVLTAAHCDRRNMEIKLGMHSKNVPNEDEQRRVPKEKFFCDSNKNYTQWNKDIMLIRLNSPVNNSTHIAPLSLPSSPPIVGSVCRIMGWGTITSPNETYPDVPHCANINLFNYTVCHGAHAGLPATSRTLCAGVLEGGKDTCKGDSGGPLICNGQFQGIVSWGGHPCAQPREPGVYTKVFDHLDWIQNIIAGSTTATCPL.

Residues 1–18 (MELIRVLANLLILQLSYA) form the signal peptide. Residues 19–24 (QKSSEL) constitute a propeptide that is removed on maturation. The Peptidase S1 domain occupies 25-249 (IIGGDECNID…HLDWIQNIIA (225 aa)). 6 cysteine pairs are disulfide-bonded: C31-C163, C50-C66, C98-C256, C142-C210, C174-C189, and C200-C225. The active-site Charge relay system is H65. N103 carries an N-linked (GlcNAc...) asparagine glycan. Residue D110 is the Charge relay system of the active site. N121, N122, N154, and N170 each carry an N-linked (GlcNAc...) asparagine glycan. S204 (charge relay system) is an active-site residue.

The protein belongs to the peptidase S1 family. Snake venom subfamily. Monomer. As to expression, expressed by the venom gland.

Its subcellular location is the secreted. Its activity is inhibited by PMSF and p-nitrophenyl-p-guanidinobenzoate (NPGB). Its function is as follows. Snake venom serine protease. Degrades concomitantly alpha- (FGA) and beta-chains of fibrinogen (FGB). This Trimeresurus stejnegeri (Chinese green tree viper) protein is Alpha- and beta-fibrinogenase stejnefibrase-1.